Consider the following 32-residue polypeptide: Cytochrome c3, 10 kDa (32 aa).

Heme-binding residues include histidine 16, cysteine 25, cysteine 28, and histidine 29.

Monomer. Binds 1 heme group per subunit.

It localises to the periplasm. Participates in sulfate respiration coupled with phosphorylation by transferring electrons from the enzyme dehydrogenase to ferredoxin. The sequence is that of Cytochrome c3, 10 kDa from Desulfuromonas acetoxidans (Chloropseudomonas ethylica).